Here is a 281-residue protein sequence, read N- to C-terminus: Light-independent protochlorophyllide reductase iron-sulfur ATP-binding protein (281 aa).

ATP is bound by residues 10 to 15 (GIGKST) and Lys-39. Ser-14 is a binding site for Mg(2+). Residues Cys-95 and Cys-129 each coordinate [4Fe-4S] cluster. Residue 180 to 181 (NR) participates in ATP binding.

This sequence belongs to the NifH/BchL/ChlL family. As to quaternary structure, homodimer. Protochlorophyllide reductase is composed of three subunits; ChlL, ChlN and ChlB. [4Fe-4S] cluster serves as cofactor.

It catalyses the reaction chlorophyllide a + oxidized 2[4Fe-4S]-[ferredoxin] + 2 ADP + 2 phosphate = protochlorophyllide a + reduced 2[4Fe-4S]-[ferredoxin] + 2 ATP + 2 H2O. Its pathway is porphyrin-containing compound metabolism; chlorophyll biosynthesis (light-independent). Component of the dark-operative protochlorophyllide reductase (DPOR) that uses Mg-ATP and reduced ferredoxin to reduce ring D of protochlorophyllide (Pchlide) to form chlorophyllide a (Chlide). This reaction is light-independent. The L component serves as a unique electron donor to the NB-component of the complex, and binds Mg-ATP. The polypeptide is Light-independent protochlorophyllide reductase iron-sulfur ATP-binding protein (Thermosynechococcus vestitus (strain NIES-2133 / IAM M-273 / BP-1)).